The primary structure comprises 365 residues: N-acetylgalactosamine-N,N'-diacetylbacillosaminyl-diphospho-undecaprenol 4-alpha-N-acetylgalactosaminyltransferase (365 aa).

Belongs to the glycosyltransferase group 1 family.

It localises to the cell inner membrane. The catalysed reaction is N-acetyl-alpha-D-galactosaminyl-(1-&gt;3)-N,N'-diacetyl-alpha-D-bacillosaminyl-tri-trans,hepta-cis-undecaprenyl diphosphate + UDP-N-acetyl-alpha-D-galactosamine = N-acetyl-alpha-D-galactosaminyl-(1-&gt;4)-N-acetyl-alpha-D-galactosaminyl-(1-&gt;3)-N,N'-diacetyl-alpha-D-bacillosaminyl-tri-trans,heptacis-undecaprenyl diphosphate + UDP + H(+). Its pathway is protein modification; protein glycosylation. Its function is as follows. Adds a GalNAc residue on to the Und-PP-Bac2,4diNAc-GalNAc disaccharide in the N-linked protein glycosylation pathway. Transfers the third sugar in the heptasaccharide biosynthesis. This Campylobacter jejuni subsp. jejuni serotype O:2 (strain ATCC 700819 / NCTC 11168) protein is N-acetylgalactosamine-N,N'-diacetylbacillosaminyl-diphospho-undecaprenol 4-alpha-N-acetylgalactosaminyltransferase (pglJ).